The primary structure comprises 121 residues: Small ribosomal subunit protein uS13 (121 aa).

Positions 88–121 are disordered; it reads GMRHRRGLPVRGQHTKNNARTRKGKAVAIANKKK.

Belongs to the universal ribosomal protein uS13 family. In terms of assembly, part of the 30S ribosomal subunit. Forms a loose heterodimer with protein S19. Forms two bridges to the 50S subunit in the 70S ribosome.

In terms of biological role, located at the top of the head of the 30S subunit, it contacts several helices of the 16S rRNA. In the 70S ribosome it contacts the 23S rRNA (bridge B1a) and protein L5 of the 50S subunit (bridge B1b), connecting the 2 subunits; these bridges are implicated in subunit movement. Contacts the tRNAs in the A and P-sites. The polypeptide is Small ribosomal subunit protein uS13 (Limosilactobacillus reuteri subsp. reuteri (strain JCM 1112) (Lactobacillus reuteri)).